The sequence spans 933 residues: Phosphoenolpyruvate carboxylase (933 aa).

Active-site residues include H158 and K592.

It belongs to the PEPCase type 1 family. Mg(2+) serves as cofactor.

The enzyme catalyses oxaloacetate + phosphate = phosphoenolpyruvate + hydrogencarbonate. Forms oxaloacetate, a four-carbon dicarboxylic acid source for the tricarboxylic acid cycle. This chain is Phosphoenolpyruvate carboxylase, found in Nitrosomonas eutropha (strain DSM 101675 / C91 / Nm57).